The sequence spans 338 residues: Ketol-acid reductoisomerase (NADP(+)) (338 aa).

Positions 1–181 (MNVYYDKDCD…GGGRSGIIET (181 aa)) constitute a KARI N-terminal Rossmann domain. NADP(+)-binding positions include 24–27 (YGSQ), Arg47, Ser50, Ser52, and 82–85 (DEFQ). Residue His107 is part of the active site. Position 133 (Gly133) interacts with NADP(+). The 146-residue stretch at 182 to 327 (TFKDETETDL…AKLRSMMPWI (146 aa)) folds into the KARI C-terminal knotted domain. Positions 190, 194, 226, and 230 each coordinate Mg(2+). Ser251 lines the substrate pocket.

This sequence belongs to the ketol-acid reductoisomerase family. Mg(2+) serves as cofactor.

It carries out the reaction (2R)-2,3-dihydroxy-3-methylbutanoate + NADP(+) = (2S)-2-acetolactate + NADPH + H(+). The enzyme catalyses (2R,3R)-2,3-dihydroxy-3-methylpentanoate + NADP(+) = (S)-2-ethyl-2-hydroxy-3-oxobutanoate + NADPH + H(+). It participates in amino-acid biosynthesis; L-isoleucine biosynthesis; L-isoleucine from 2-oxobutanoate: step 2/4. The protein operates within amino-acid biosynthesis; L-valine biosynthesis; L-valine from pyruvate: step 2/4. Involved in the biosynthesis of branched-chain amino acids (BCAA). Catalyzes an alkyl-migration followed by a ketol-acid reduction of (S)-2-acetolactate (S2AL) to yield (R)-2,3-dihydroxy-isovalerate. In the isomerase reaction, S2AL is rearranged via a Mg-dependent methyl migration to produce 3-hydroxy-3-methyl-2-ketobutyrate (HMKB). In the reductase reaction, this 2-ketoacid undergoes a metal-dependent reduction by NADPH to yield (R)-2,3-dihydroxy-isovalerate. In Psychrobacter sp. (strain PRwf-1), this protein is Ketol-acid reductoisomerase (NADP(+)).